The chain runs to 215 residues: Urease accessory protein UreG (215 aa).

24–31 (GPVGSGKT) lines the GTP pocket.

Belongs to the SIMIBI class G3E GTPase family. UreG subfamily. Homodimer. UreD, UreF and UreG form a complex that acts as a GTP-hydrolysis-dependent molecular chaperone, activating the urease apoprotein by helping to assemble the nickel containing metallocenter of UreC. The UreE protein probably delivers the nickel.

The protein localises to the cytoplasm. Facilitates the functional incorporation of the urease nickel metallocenter. This process requires GTP hydrolysis, probably effectuated by UreG. The protein is Urease accessory protein UreG of Burkholderia ambifaria (strain ATCC BAA-244 / DSM 16087 / CCUG 44356 / LMG 19182 / AMMD) (Burkholderia cepacia (strain AMMD)).